The primary structure comprises 101 residues: Small ribosomal subunit protein bS18c (101 aa).

Belongs to the bacterial ribosomal protein bS18 family. As to quaternary structure, part of the 30S ribosomal subunit.

The protein localises to the plastid. It localises to the chloroplast. The polypeptide is Small ribosomal subunit protein bS18c (Nymphaea alba (White water-lily)).